A 342-amino-acid polypeptide reads, in one-letter code: Holliday junction branch migration complex subunit RuvB (342 aa).

The interval 2–181 (TDNPLLSSAS…FGIPVRLQFY (180 aa)) is large ATPase domain (RuvB-L). The ATP site is built by Leu20, Arg21, Gly62, Lys65, Thr66, Thr67, Arg171, Tyr181, and Arg218. Thr66 is a Mg(2+) binding site. A small ATPAse domain (RuvB-S) region spans residues 182–252 (SVEELERVVA…IADNALTRLE (71 aa)). Residues 255–342 (KIGLDLQDRR…QMPGLFGPDE (88 aa)) are head domain (RuvB-H). DNA is bound by residues Arg291, Arg310, and Arg315.

This sequence belongs to the RuvB family. As to quaternary structure, homohexamer. Forms an RuvA(8)-RuvB(12)-Holliday junction (HJ) complex. HJ DNA is sandwiched between 2 RuvA tetramers; dsDNA enters through RuvA and exits via RuvB. An RuvB hexamer assembles on each DNA strand where it exits the tetramer. Each RuvB hexamer is contacted by two RuvA subunits (via domain III) on 2 adjacent RuvB subunits; this complex drives branch migration. In the full resolvosome a probable DNA-RuvA(4)-RuvB(12)-RuvC(2) complex forms which resolves the HJ.

Its subcellular location is the cytoplasm. It carries out the reaction ATP + H2O = ADP + phosphate + H(+). Functionally, the RuvA-RuvB-RuvC complex processes Holliday junction (HJ) DNA during genetic recombination and DNA repair, while the RuvA-RuvB complex plays an important role in the rescue of blocked DNA replication forks via replication fork reversal (RFR). RuvA specifically binds to HJ cruciform DNA, conferring on it an open structure. The RuvB hexamer acts as an ATP-dependent pump, pulling dsDNA into and through the RuvAB complex. RuvB forms 2 homohexamers on either side of HJ DNA bound by 1 or 2 RuvA tetramers; 4 subunits per hexamer contact DNA at a time. Coordinated motions by a converter formed by DNA-disengaged RuvB subunits stimulates ATP hydrolysis and nucleotide exchange. Immobilization of the converter enables RuvB to convert the ATP-contained energy into a lever motion, pulling 2 nucleotides of DNA out of the RuvA tetramer per ATP hydrolyzed, thus driving DNA branch migration. The RuvB motors rotate together with the DNA substrate, which together with the progressing nucleotide cycle form the mechanistic basis for DNA recombination by continuous HJ branch migration. Branch migration allows RuvC to scan DNA until it finds its consensus sequence, where it cleaves and resolves cruciform DNA. The polypeptide is Holliday junction branch migration complex subunit RuvB (Novosphingobium aromaticivorans (strain ATCC 700278 / DSM 12444 / CCUG 56034 / CIP 105152 / NBRC 16084 / F199)).